A 268-amino-acid polypeptide reads, in one-letter code: Phosphatidylglycerol--prolipoprotein diacylglyceryl transferase (268 aa).

Transmembrane regions (helical) follow at residues 27–47 (PALRWYGFTYLVGFVAAMWLL), 66–86 (LLFYGFLGVILGGRIGYVLFY), 104–124 (GGMSFHGGLIGVITAMIYITW), 130–150 (FFAVADMVAPVVPIGLGAGRI), 181–201 (PSQLYQFALEGVALFLLLYWF), 208–228 (VGAVSGMFLLGYGIFRVIVET), and 242–262 (LMTMGQILSVPMILFGLYLIL). Arginine 149 provides a ligand contact to a 1,2-diacyl-sn-glycero-3-phospho-(1'-sn-glycerol).

This sequence belongs to the Lgt family.

Its subcellular location is the cell inner membrane. The catalysed reaction is L-cysteinyl-[prolipoprotein] + a 1,2-diacyl-sn-glycero-3-phospho-(1'-sn-glycerol) = an S-1,2-diacyl-sn-glyceryl-L-cysteinyl-[prolipoprotein] + sn-glycerol 1-phosphate + H(+). Its pathway is protein modification; lipoprotein biosynthesis (diacylglyceryl transfer). Functionally, catalyzes the transfer of the diacylglyceryl group from phosphatidylglycerol to the sulfhydryl group of the N-terminal cysteine of a prolipoprotein, the first step in the formation of mature lipoproteins. The sequence is that of Phosphatidylglycerol--prolipoprotein diacylglyceryl transferase from Shewanella oneidensis (strain ATCC 700550 / JCM 31522 / CIP 106686 / LMG 19005 / NCIMB 14063 / MR-1).